We begin with the raw amino-acid sequence, 305 residues long: Putative S-adenosyl-L-methionine-dependent methyltransferase Mvan_1344 (305 aa).

Residues D130 and 159–160 contribute to the S-adenosyl-L-methionine site; that span reads DL.

It belongs to the UPF0677 family.

Its function is as follows. Exhibits S-adenosyl-L-methionine-dependent methyltransferase activity. This Mycolicibacterium vanbaalenii (strain DSM 7251 / JCM 13017 / BCRC 16820 / KCTC 9966 / NRRL B-24157 / PYR-1) (Mycobacterium vanbaalenii) protein is Putative S-adenosyl-L-methionine-dependent methyltransferase Mvan_1344.